The sequence spans 157 residues: Dihydrofolate reductase type 15 (157 aa).

The region spanning 2–156 (KLSLMAAISK…INYSYQIWQK (155 aa)) is the DHFR domain.

The protein belongs to the dihydrofolate reductase family. Homodimer.

The enzyme catalyses (6S)-5,6,7,8-tetrahydrofolate + NADP(+) = 7,8-dihydrofolate + NADPH + H(+). It participates in cofactor biosynthesis; tetrahydrofolate biosynthesis; 5,6,7,8-tetrahydrofolate from 7,8-dihydrofolate: step 1/1. In terms of biological role, key enzyme in folate metabolism. Catalyzes an essential reaction for de novo glycine and purine synthesis, and for DNA precursor synthesis. In Escherichia coli, this protein is Dihydrofolate reductase type 15 (dhfrXV).